The primary structure comprises 299 residues: tRNA dimethylallyltransferase (299 aa).

Residue G10–T17 participates in ATP binding. Residue T12–T17 participates in substrate binding. An interaction with substrate tRNA region spans residues D35 to Q38.

It belongs to the IPP transferase family. Monomer. Mg(2+) is required as a cofactor.

The catalysed reaction is adenosine(37) in tRNA + dimethylallyl diphosphate = N(6)-dimethylallyladenosine(37) in tRNA + diphosphate. Functionally, catalyzes the transfer of a dimethylallyl group onto the adenine at position 37 in tRNAs that read codons beginning with uridine, leading to the formation of N6-(dimethylallyl)adenosine (i(6)A). This Streptococcus thermophilus (strain CNRZ 1066) protein is tRNA dimethylallyltransferase.